We begin with the raw amino-acid sequence, 82 residues long: Cobrotoxin-b (82 aa).

An N-terminal signal peptide occupies residues 1–21 (MKTLLLTLLVVTIVCLDLGYT). Cystine bridges form between Cys-24–Cys-44, Cys-38–Cys-61, Cys-63–Cys-74, and Cys-75–Cys-80.

This sequence belongs to the three-finger toxin family. Short-chain subfamily. Type I alpha-neurotoxin sub-subfamily. As to expression, expressed by the venom gland.

Its subcellular location is the secreted. Binds to muscle nicotinic acetylcholine receptor (nAChR) and inhibit acetylcholine from binding to the receptor, thereby impairing neuromuscular transmission. Produces peripheral paralysis by blocking neuromuscular transmission at the postsynaptic site. Has a lower toxicity than cobrotoxin. The protein is Cobrotoxin-b of Naja atra (Chinese cobra).